We begin with the raw amino-acid sequence, 862 residues long: Probable linoleate 9S-lipoxygenase 5 (862 aa).

In terms of domain architecture, PLAT spans asparagine 36–alanine 161. A Lipoxygenase domain is found at alanine 164–isoleucine 862. Residues histidine 523, histidine 528, histidine 714, asparagine 718, and isoleucine 862 each contribute to the Fe cation site.

The protein belongs to the lipoxygenase family. As to quaternary structure, monomer. The cofactor is Fe cation. As to expression, not detected in leaves, stems, flowers, roots, tubers and stolons during normal growth and development.

The protein localises to the cytoplasm. It catalyses the reaction (9Z,12Z)-octadecadienoate + O2 = (9S)-hydroperoxy-(10E,12Z)-octadecadienoate. Its pathway is lipid metabolism; oxylipin biosynthesis. In terms of biological role, plant lipoxygenases may be involved in a number of diverse aspects of plant physiology including growth and development, pest resistance, and senescence or responses to wounding. May contribute to cell death during the hypersensitive response (HR) by the massive production of free fatty acid hydroperoxides. Catalyzes the hydroperoxidation of lipids containing a cis,cis-1,4-pentadiene structure. The chain is Probable linoleate 9S-lipoxygenase 5 (LOX1.5) from Solanum tuberosum (Potato).